The primary structure comprises 311 residues: Methionyl-tRNA formyltransferase (311 aa).

112-115 is a (6S)-5,6,7,8-tetrahydrofolate binding site; sequence SLLP.

This sequence belongs to the Fmt family.

It carries out the reaction L-methionyl-tRNA(fMet) + (6R)-10-formyltetrahydrofolate = N-formyl-L-methionyl-tRNA(fMet) + (6S)-5,6,7,8-tetrahydrofolate + H(+). In terms of biological role, attaches a formyl group to the free amino group of methionyl-tRNA(fMet). The formyl group appears to play a dual role in the initiator identity of N-formylmethionyl-tRNA by promoting its recognition by IF2 and preventing the misappropriation of this tRNA by the elongation apparatus. This chain is Methionyl-tRNA formyltransferase, found in Bradyrhizobium sp. (strain BTAi1 / ATCC BAA-1182).